The sequence spans 174 residues: MSYKLDVKAQYIKDLSFENPNSPQIFVMMSKATPEINISVNVSSISLPVKADDQKSGTENLSSLYEVTLQVNAEARIQNTVAFICEIKYCGVFSIKSDTENNEIDLSHQEVKDMLLVAAPSILFPFVRELIARATSSSGFPPLMLDIVDFRTMYENQLKQGVGQNDNDNSVDNV.

It belongs to the SecB family. As to quaternary structure, homotetramer, a dimer of dimers. One homotetramer interacts with 1 SecA dimer.

The protein localises to the cytoplasm. Its function is as follows. One of the proteins required for the normal export of preproteins out of the cell cytoplasm. It is a molecular chaperone that binds to a subset of precursor proteins, maintaining them in a translocation-competent state. It also specifically binds to its receptor SecA. The chain is Protein-export protein SecB from Ehrlichia ruminantium (strain Gardel).